Consider the following 1104-residue polypeptide: General transcription factor II-I repeat domain-containing protein 1 (1104 aa).

Residues Lys-27, Lys-184, Lys-212, Lys-225, Lys-238, Lys-271, Lys-337, Lys-436, Lys-439, and Lys-443 each participate in a glycyl lysine isopeptide (Lys-Gly) (interchain with G-Cter in SUMO2) cross-link. The stretch at 119-213 (LEQCSDVYLL…PDDGGQDTKA (95 aa)) is one GTF2I-like 1 repeat. One copy of the GTF2I-like 2 repeat lies at 342–436 (IKEMEDINTL…FDERIFTGNK (95 aa)). Ser-448 carries the post-translational modification Phosphoserine. The tract at residues 509–559 (SDPSPTSEEMTDSLPGHLPSEDSGYGMEMPADKGPSEEPWSEERPAEESPG) is disordered. Basic and acidic residues predominate over residues 538–555 (PADKGPSEEPWSEERPAE). A GTF2I-like 3 repeat occupies 556-650 (ESPGDVIRPL…ELLTDGVKEP (95 aa)). Residues Lys-567, Lys-579, Lys-588, Lys-622, Lys-638, Lys-669, Lys-709, Lys-717, Lys-757, Lys-759, and Lys-772 each participate in a glycyl lysine isopeptide (Lys-Gly) (interchain with G-Cter in SUMO2) cross-link. Residues 681–775 (LSRIDIANTL…FQGLIPKPET (95 aa)) form a GTF2I-like 4 repeat. A disordered region spans residues 783 to 802 (EAGKTTRPRRLQQDTWQPDE). Residues 805–899 (ANRLGEKVIL…LQPFAEVCND (95 aa)) form a GTF2I-like 5 repeat. Glycyl lysine isopeptide (Lys-Gly) (interchain with G-Cter in SUMO2) cross-links involve residues Lys-841 and Lys-901. The stretch at 908 to 1002 (SNKLGKKVIL…LQPFGDVCNN (95 aa)) is one GTF2I-like 6 repeat. 2 disordered regions span residues 1001 to 1044 (NNAK…VAST) and 1058 to 1104 (LHPN…LPTR). Positions 1012–1019 (PKRKRKRV) match the Nuclear localization signal motif. Over residues 1021 to 1043 (EGNSVSSSSSSSSSSSNPESVAS) the composition is skewed to low complexity.

This sequence belongs to the TFII-I family. In terms of assembly, interacts with the retinoblastoma protein (RB1) via its C-terminus. Widely expressed.

The protein resides in the nucleus. May be a transcription regulator involved in cell-cycle progression and skeletal muscle differentiation. May repress GTF2I transcriptional functions, by preventing its nuclear residency, or by inhibiting its transcriptional activation. May contribute to slow-twitch fiber type specificity during myogenesis and in regenerating muscles. Binds troponin I slow-muscle fiber enhancer (USE B1). Binds specifically and with high affinity to the EFG sequences derived from the early enhancer of HOXC8. This Mus musculus (Mouse) protein is General transcription factor II-I repeat domain-containing protein 1 (Gtf2ird1).